The chain runs to 401 residues: Phosphoglycerate kinase (401 aa).

Substrate contacts are provided by residues 26 to 28 (DFN), Arg-41, 64 to 67 (HLGK), Arg-125, and Arg-158. ATP contacts are provided by residues Lys-209, Gly-300, Glu-331, and 357–360 (GGDS).

Belongs to the phosphoglycerate kinase family. In terms of assembly, monomer.

It is found in the cytoplasm. The catalysed reaction is (2R)-3-phosphoglycerate + ATP = (2R)-3-phospho-glyceroyl phosphate + ADP. The protein operates within carbohydrate degradation; glycolysis; pyruvate from D-glyceraldehyde 3-phosphate: step 2/5. The sequence is that of Phosphoglycerate kinase from Clostridium tetani (strain Massachusetts / E88).